The primary structure comprises 201 residues: Glycerol-3-phosphate acyltransferase (201 aa).

5 helical membrane passes run 9–29 (LTLIGALVFGYFLGSIPFGLI), 60–80 (LAAATLIFDMLKGTVAVLVAS), 86–106 (AAIGAGFGAFIGHLFPVWIGF), 116–136 (LGVLIGLAWPGALVFAAVWIV), and 153–173 (IVVPIALYSRGYPAIAVLFAI).

Belongs to the PlsY family. In terms of assembly, probably interacts with PlsX.

The protein localises to the cell inner membrane. It carries out the reaction an acyl phosphate + sn-glycerol 3-phosphate = a 1-acyl-sn-glycero-3-phosphate + phosphate. Its pathway is lipid metabolism; phospholipid metabolism. Its function is as follows. Catalyzes the transfer of an acyl group from acyl-phosphate (acyl-PO(4)) to glycerol-3-phosphate (G3P) to form lysophosphatidic acid (LPA). This enzyme utilizes acyl-phosphate as fatty acyl donor, but not acyl-CoA or acyl-ACP. The sequence is that of Glycerol-3-phosphate acyltransferase from Brucella anthropi (strain ATCC 49188 / DSM 6882 / CCUG 24695 / JCM 21032 / LMG 3331 / NBRC 15819 / NCTC 12168 / Alc 37) (Ochrobactrum anthropi).